The following is a 1102-amino-acid chain: Phosphatidylinositol 4,5-bisphosphate 3-kinase catalytic subunit gamma isoform (1102 aa).

The PI3K-ABD domain maps to 34-141 (SMELIPIEFV…PGQIHVVQRH (108 aa)). One can recognise a PI3K-RBD domain in the interval 217–309 (NNCVFIVIHR…GEEIHLVLDT (93 aa)). The C2 PI3K-type domain occupies 357–521 (CDRKFRVKIR…NSMSISILLD (165 aa)). A PIK helical domain is found at 541 to 723 (DRVRAEMPNQ…AVILEAYLRG (183 aa)). One can recognise a PI3K/PI4K catalytic domain in the interval 797–1080 (VIEKCKVMAS…QIEVCRDKGW (284 aa)). Positions 803 to 809 (VMASKKK) are G-loop. ATP is bound by residues 829 to 838 (GIIFKHGDDL) and 864 to 872 (LLPYGCIST). The catalytic loop stretch occupies residues 943-951 (GIGDRHNDN). 961–969 (FHIDFGHIL) is an ATP binding site. Residues 962–988 (HIDFGHILGNYKSFLGINKERVPFVLT) are activation loop. Thr-1024 is modified (phosphothreonine; by PKA). At Ser-1101 the chain carries Phosphoserine; by autocatalysis.

The protein belongs to the PI3/PI4-kinase family. In terms of assembly, heterodimer of a catalytic subunit PIK3CG and a PIK3R5 or PIK3R6 regulatory subunit. Interacts with GRK2 through the PIK helical domain. Interaction with GRK2 is required for targeting to agonist-occupied receptor. Interacts with PDE3B; regulates PDE3B activity and thereby cAMP levels in cells. Interacts with TPM2. Interacts with EPHA8; regulates integrin-mediated cell adhesion to substrate. Interacts with HRAS; the interaction is required for membrane recruitment and beta-gamma G protein dimer-dependent activation of the PI3K gamma complex PIK3CG:PIK3R6. Autophosphorylation at Ser-1101 has no effect on the phosphatidylinositol-4,5-bisphosphate 3-kinase activity.

It localises to the cytoplasm. Its subcellular location is the cell membrane. It catalyses the reaction a 1,2-diacyl-sn-glycero-3-phospho-(1D-myo-inositol-4,5-bisphosphate) + ATP = a 1,2-diacyl-sn-glycero-3-phospho-(1D-myo-inositol-3,4,5-trisphosphate) + ADP + H(+). The enzyme catalyses a 1,2-diacyl-sn-glycero-3-phospho-(1D-myo-inositol) + ATP = a 1,2-diacyl-sn-glycero-3-phospho-(1D-myo-inositol-3-phosphate) + ADP + H(+). The catalysed reaction is a 1,2-diacyl-sn-glycero-3-phospho-(1D-myo-inositol 4-phosphate) + ATP = a 1,2-diacyl-sn-glycero-3-phospho-(1D-myo-inositol-3,4-bisphosphate) + ADP + H(+). It carries out the reaction L-seryl-[protein] + ATP = O-phospho-L-seryl-[protein] + ADP + H(+). Its pathway is phospholipid metabolism; phosphatidylinositol phosphate biosynthesis. Activated by both the alpha and the beta-gamma G proteins following stimulation of G protein-coupled receptors (GPCRs). Activation by GPCRs is assisted by the regulatory subunits (PIK3R5 or PIK3R6) leading to the translocation from the cytosol to the plasma membrane and to kinase activation. When bound to PIK3R5 the PI3K activity of PIK3CG could be activated greater than 100-fold by the beta-gamma G proteins. Its function is as follows. Phosphoinositide-3-kinase (PI3K) that phosphorylates PtdIns(4,5)P2 (Phosphatidylinositol 4,5-bisphosphate) to generate phosphatidylinositol 3,4,5-trisphosphate (PIP3). PIP3 plays a key role by recruiting PH domain-containing proteins to the membrane, including AKT1 and PDPK1, activating signaling cascades involved in cell growth, survival, proliferation, motility and morphology. Links G-protein coupled receptor activation to PIP3 production. Involved in immune, inflammatory and allergic responses. Modulates leukocyte chemotaxis to inflammatory sites and in response to chemoattractant agents. May control leukocyte polarization and migration by regulating the spatial accumulation of PIP3 and by regulating the organization of F-actin formation and integrin-based adhesion at the leading edge. Controls motility of dendritic cells. Participates in T-lymphocyte migration. Regulates T-lymphocyte proliferation and cytokine production. Required for B-lymphocyte development and signaling. Together with other PI3Ks are involved in the oxidative burst produced by neutrophils in response to chemotactic agents. Together with PIK3CD regulate neutrophil extravasation. Together with PIK3CB promotes platelet aggregation and thrombosis. Regulates alpha-IIb/beta-3 integrins (ITGA2B/ ITGB3) adhesive function in platelets downstream of P2Y12 through a lipid kinase activity-independent mechanism. May have also a lipid kinase activity-dependent function in platelet aggregation. Involved in endothelial progenitor cell migration. Negative regulator of cardiac contractility. Modulates cardiac contractility by anchoring protein kinase A (PKA) and PDE3B activation, reducing cAMP levels. Regulates cardiac contractility also by promoting beta-adrenergic receptor internalization by binding to GRK2 and by non-muscle tropomyosin phosphorylation. Also has serine/threonine protein kinase activity: both lipid and protein kinase activities are required for beta-adrenergic receptor endocytosis. May also have a scaffolding role in modulating cardiac contractility. Contribute to cardiac hypertrophy under pathological stress. Through simultaneous binding of PDE3B to RAPGEF3 and PIK3R6 is assembled in a signaling complex in which the PI3K gamma complex is activated by RAPGEF3 and which is involved in angiogenesis. In neutrophils, participates in a phospholipase C-activating N-formyl peptide-activated GPCR (G protein-coupled receptor) signaling pathway downstream of RASGRP4-mediated Ras-activation, to promote neutrophil functional responses. This is Phosphatidylinositol 4,5-bisphosphate 3-kinase catalytic subunit gamma isoform (PIK3CG) from Sus scrofa (Pig).